Reading from the N-terminus, the 298-residue chain is ATP synthase gamma chain (298 aa).

This sequence belongs to the ATPase gamma chain family. As to quaternary structure, F-type ATPases have 2 components, CF(1) - the catalytic core - and CF(0) - the membrane proton channel. CF(1) has five subunits: alpha(3), beta(3), gamma(1), delta(1), epsilon(1). CF(0) has three main subunits: a, b and c.

The protein resides in the cell inner membrane. In terms of biological role, produces ATP from ADP in the presence of a proton gradient across the membrane. The gamma chain is believed to be important in regulating ATPase activity and the flow of protons through the CF(0) complex. The protein is ATP synthase gamma chain of Granulibacter bethesdensis (strain ATCC BAA-1260 / CGDNIH1).